The chain runs to 445 residues: Putative diacyglycerol O-acyltransferase Rv2285 (445 aa).

The active-site Proton acceptor is H135.

This sequence belongs to the long-chain O-acyltransferase family.

The enzyme catalyses an acyl-CoA + a 1,2-diacyl-sn-glycerol = a triacyl-sn-glycerol + CoA. The catalysed reaction is di-(9Z)-octadecenoylglycerol + (9Z)-octadecenoyl-CoA = 1,2,3-tri-(9Z-octadecenoyl)-glycerol + CoA. The protein operates within glycerolipid metabolism; triacylglycerol biosynthesis. Its function is as follows. Catalyzes the terminal and only committed step in triacylglycerol synthesis by using diacylglycerol and fatty acyl CoA as substrates. Required for storage lipid synthesis. In terms of biological role, upon expression in E.coli functions weakly as a triacylglycerol synthase, making triacylglycerol (TG) from diolein and long-chain fatty acyl-CoA. Has very weak wax synthase activity, incorporating palmityl alcohol into wax esters in the presence of palmitoyl-CoA. The polypeptide is Putative diacyglycerol O-acyltransferase Rv2285 (Mycobacterium tuberculosis (strain ATCC 25618 / H37Rv)).